Reading from the N-terminus, the 447-residue chain is GTPase Der (447 aa).

2 EngA-type G domains span residues 4-165 (QIIT…PEEE) and 180-357 (LQIV…KIWN). GTP contacts are provided by residues 10–17 (GRPNVGKS), 57–61 (DTPGL), 119–122 (NKCE), 186–193 (GRPNAGKS), 233–237 (DTAGL), and 298–301 (NKWD). A KH-like domain is found at 358-443 (KKITTSKLNE…PIRFTYVKTK (86 aa)).

This sequence belongs to the TRAFAC class TrmE-Era-EngA-EngB-Septin-like GTPase superfamily. EngA (Der) GTPase family. Associates with the 50S ribosomal subunit.

In terms of biological role, GTPase that plays an essential role in the late steps of ribosome biogenesis. The protein is GTPase Der of Rickettsia rickettsii (strain Sheila Smith).